We begin with the raw amino-acid sequence, 3003 residues long: MEEKQQIILANQDGGTVTGGAPTFFVILKQPGNGKTDQGILVTNRDARALLSRESSPGKSKEKICLPADCTVGKITVTLDNNSMWNEFHNRSTEMILTKQGRRMFPYCRYWITGLDSNLKYILVMDISPVDSHRYKWNGRWWEPSGKAEPHILGRVFIHPESPSTGHYWMHQPVSFYKLKLTNNTLDQEGHIILHSMHRYLPRLHLVPAEKATEVIQLNGPGVHTFTFPQTEFFAVTAYQNIQITQLKIDYNPFAKGFRDDGLSSKPQREGKQRNSSDQEGNSVSSSPAHRVRLTEGEGSEIHSGDFDPVLRGHEASSLSLEKAPHNVKQDFLGFMNTDSTHEVPQLKHEISESRIVNSFEDDSQISSPSNPNGNFNVVIKEEPLDDYDYELGECPEGITVKQEETDEETDVYSNSDDDPILEKQLKRHNKVDNLEADHPSYKWLPNSPGVAKAKMFKLDAGKMPVVYLEPCAVTKSTVKISELPDNMLSTSRKDKSMLAELEYLPAYIENSDGTDFCLSKDSENSLRKHSPDLRIVQKYTLLKEPNWKYPDILDNSSTERIHDSSKGSTAESFSGKEDLGKKRTTMLKMAIPSKTVTASHSASPNTPGKRGRPRKLRLSKAGRPPKNTGKSLTAAKNIPVGPGSTFPDVKPDLEDVDGVLFVSFESKEALDIHAVDGTTEEPSSLQTTTTNDSGCRTRISQLEKELIEDLKSLRHKQVIHPALQEVGLKLNSVDPTVSIDLKYLGVQLPLAPATSFPLWNVTGTNPASPDAGFPFVSRTGKTNDFTKIKGWRGKFQNASASRNEGGNSEASLKNRSAFCSDKLDEYLENEGKLMETNIGFSSNAPTSPVVYQLPTKSTSYVRTLDSVLKKQSTISPSTSHSVKPQSVTTASRKTKAQNKQTTLSGRTKSSYKSILPYPVSPKQKNSHVSQGDKITKNSLSSTSDNQVTNLVVPSVDENAFPKQISLRQAQQQHLQQQGTRPPGLSKSQVKLMDLEDCALWEGKPRTYITEERADVSLTTLLTAQASLKTKPIHTIIRKRAPPCNNDFCRLGCVCSSLALEKRQPAHCRRPDCMFGCTCLKRKVVLVKGGSKTKHFHKKAANRDPLFYDTLGEEGREGGGVREDEEQLKEKKKRKKLEYTVCEAEPEQPVRHYPLWVKVEGEVDPEPVYIPTPSVIEPIKPLVLPQPDLSSTTKGKLTPGIKPARTYTPKPNPVIREEDKDPVYLYFESMMTCARVRVYERKKEEQRQLSPPLSPSSSFQQQSSCYSSPENRVTKELDSEQTLKQLICDLEDDSDKSQEKSWKSSCNEGESSSTSYVHQRSPGGPTKLIEIISDCNWEEDRNKILSILSQHINSNMPQSLKVGSFIIELASQRKCRGEKTPPVYSSRVKISMPSSQDQDDMAEKSGSETPDGPLSPGKMDDISPVQTDALDSVRERLHGGKGLPFYAGLSPSGKLVAYKRKPSSTTSGLIQVASNAKVAASRKPRTLLPSTSNSKMASSGPATNRSGKNLKAFVPAKRPIAARPSPGGVFTQFVMSKVGALQQKIPGVRTPQPLTGPQKFSIRPSPVMVVTPVVSSEQVQVCSTVAAAVTTSPQVFLENVTAVPSLTANSDMGAKEATYSSSASTAGVVEISETNNTTLVTSTQSTATVNLTKTTGITTSPVASVSFAKPLVASPTITLPVASTASTSIVMVTTAASSSVVTTPTSSLSSVPIILSGINGSPPVSQRPENAPQIPVTTPQISSNNVKRTGPRLLHPNGQIVQLLPLHQIRGSNAQPSLQPVVFRNPGSMVGIRLPAPCKSSETPSSSASSSAFSVMSPVIQAVGSSPTVNVISQAPSLLSSGSSFVSQAGTLTLRISPPETQNLASKTGSESKITPSTGGQPVGTASLIPLQSGSFALLQLPGQKPIPSSVLQHVASLQIKKESQSTDQKDETNSIKREEETKKALPSKDKALDSEANIMKQNSGIIASENTSNNSLDDGGDLLDEETLREDARPYEYSYSTGSHTDEDKDGDEDSGNKNQNSPKEKQTVPEVRAGSKNIDIMALQSIRSIRPQKCVKVKVEPQEGSDNPENPDDFLVLSKDSKFELSGNQVKEQQSNSQAEAKKDCEDSLGKDSLRERWRKHLKGPLTQKYIGISQNFNKEANVQFFTEMKPCQENSEQDISELLGKSGTIESGGVLKTEDGSWSGISSSAAFSIIPRRATKGRRGSRHFQGHLLLPREQMKPKQQTKDGRSSAADFTVLDLEDEDEEDEKTDDSLDEIVDVVSGYQSEEVDVEKNNYVDYLEDDEQVDVETIEELSEEINFPYKKTTATHTQSFKQQCHSHISADEKASEKSRKVSLISSKLKDDCWGDKPHKETEAFAYYRRTHTANERRRRGEMRDLFEKLKITLGLLHSSKVSKSLILNRAFSEIQGLTDQADKLIGQKNLLSRKRSILIRKVSSLSGKTEEVVLKKLEYIYAKQQALEAQKRKKKLGSDEFCVSPRIGTQLEGSSASSVDLGQMLMNNRRGKPLILSRKRDQATENASPSDTPHSSANLVMTPQGQLLTLKGPLFSGPVVAVSPALLEGGLKPQVASSTMSQSENDDLFMMPRIVNVTSLAAEEDLGGMSGNKYRHEVPDGKPLDHLRDIAGSEASSLKDTERISSRGNHRDSRKALGPTQVLLANKDSGFPHVADVSTMQAAQEFIPKNMSGDVRGHRYKWKECELRGERLKSKESQFHKLKMKDLKDSSIEMELRKVASAIEEAALHPSELLTNMEDEDDTDETLTSLLNEIAFLNQQLNDDSGLAELSGSMDTEFSGDAQRAFISKLAPGNRSAFQVGHLGAGVKELPDVQEESESISPLLLHLEDDDFSENEKQLGDTASEPDVLKIVIDPEIKDSLVSHRKSSDGGQSTSGLPAEPESVSSPPILHMKTGPENSNTDTLWRPMPKLAPLGLKVANPPSDADGQSLKVMPALAPIAAKVGSIGHKMNLAGIDQEGRGSKVMPTLAPVVPKLGNSGAPSSSSGK.

Residues Lys4 and Lys178 each participate in a glycyl lysine isopeptide (Lys-Gly) (interchain with G-Cter in SUMO2) cross-link. Residues 84–260 (MWNEFHNRST…YNPFAKGFRD (177 aa)) constitute a DNA-binding region (T-box). Positions 259 to 277 (RDDGLSSKPQREGKQRNSS) are enriched in basic and acidic residues. A disordered region spans residues 259–290 (RDDGLSSKPQREGKQRNSSDQEGNSVSSSPAH). The segment covering 278 to 288 (DQEGNSVSSSP) has biased composition (polar residues). Glycyl lysine isopeptide (Lys-Gly) (interchain with G-Cter in SUMO2) cross-links involve residues Lys323, Lys329, Lys348, Lys431, Lys458, Lys463, and Lys480. Ser531 is modified (phosphoserine). Residues 553-647 (ILDNSSTERI…NIPVGPGSTF (95 aa)) are disordered. A Glycyl lysine isopeptide (Lys-Gly) (interchain with G-Cter in SUMO2) cross-link involves residue Lys567. Residues 595-607 (KTVTASHSASPNT) are compositionally biased toward polar residues. Phosphoserine is present on Ser604. Residues Lys610, Lys651, Lys782, Lys788, Lys814, and Lys823 each participate in a glycyl lysine isopeptide (Lys-Gly) (interchain with G-Cter in SUMO2) cross-link. Basic residues predominate over residues 610–621 (KRGRPRKLRLSK). Ser848 is subject to Phosphoserine. Polar residues predominate over residues 871–913 (KQSTISPSTSHSVKPQSVTTASRKTKAQNKQTTLSGRTKSSYK). 2 disordered regions span residues 871–946 (KQST…TSDN) and 967–987 (LRQA…GLSK). At Ser921 the chain carries Phosphoserine. Residue Lys925 forms a Glycyl lysine isopeptide (Lys-Gly) (interchain with G-Cter in SUMO2) linkage. The segment covering 937 to 946 (KNSLSSTSDN) has biased composition (polar residues). Low complexity predominate over residues 969-978 (QAQQQHLQQQ). Residues Lys987 and Lys1088 each participate in a glycyl lysine isopeptide (Lys-Gly) (interchain with G-Cter in SUMO2) cross-link. The interval 1111–1130 (LGEEGREGGGVREDEEQLKE) is disordered. Residues 1113 to 1122 (EEGREGGGVR) are compositionally biased toward basic and acidic residues. Residues Lys1136, Lys1158, Lys1194, and Lys1202 each participate in a glycyl lysine isopeptide (Lys-Gly) (interchain with G-Cter in SUMO2) cross-link. 4 disordered regions span residues 1186 to 1215 (QPDL…NPVI), 1246 to 1277 (QRQL…TKEL), 1297 to 1323 (SQEK…RSPG), and 1376 to 1424 (RGEK…DISP). 2 stretches are compositionally biased toward low complexity: residues 1248–1269 (QLSP…YSSP) and 1303–1315 (KSSC…SSTS). 2 positions are modified to phosphoserine: Ser1423 and Ser1450. Glycyl lysine isopeptide (Lys-Gly) (interchain with G-Cter in SUMO2) cross-links involve residues Lys1454 and Lys1495. 6 disordered regions span residues 1476 to 1508 (AKVA…RSGK), 1722 to 1746 (PPVS…SNNV), 1856 to 1885 (ISPP…PVGT), 1920 to 1954 (IKKE…KALD), 1964 to 1983 (SGII…GGDL), and 1988 to 2038 (TLRE…AGSK). Composition is skewed to polar residues over residues 1488 to 1507 (LPST…NRSG), 1735 to 1746 (PVTTPQISSNNV), and 1859 to 1880 (PETQ…STGG). Residues Lys1937 and Lys1944 each participate in a glycyl lysine isopeptide (Lys-Gly) (interchain with G-Cter in SUMO2) cross-link. Residues 1964–1976 (SGIIASENTSNNS) are compositionally biased toward polar residues. Residues Lys2060 and Lys2084 each participate in a glycyl lysine isopeptide (Lys-Gly) (interchain with G-Cter in SUMO2) cross-link. The tract at residues 2087 to 2110 (LSGNQVKEQQSNSQAEAKKDCEDS) is disordered. Over residues 2088–2101 (SGNQVKEQQSNSQA) the composition is skewed to polar residues. Residues Lys2104, Lys2152, and Lys2179 each participate in a glycyl lysine isopeptide (Lys-Gly) (interchain with G-Cter in SUMO2) cross-link. Arg2206 carries the post-translational modification Omega-N-methylarginine. A disordered region spans residues 2207–2255 (GSRHFQGHLLLPREQMKPKQQTKDGRSSAADFTVLDLEDEDEEDEKTDD). Basic and acidic residues predominate over residues 2220–2232 (EQMKPKQQTKDGR). Residue Lys2225 forms a Glycyl lysine isopeptide (Lys-Gly) (interchain with G-Cter in SUMO2) linkage. The segment covering 2242 to 2255 (DLEDEDEEDEKTDD) has biased composition (acidic residues). Residues Lys2317, Lys2352, Lys2396, and Lys2471 each participate in a glycyl lysine isopeptide (Lys-Gly) (interchain with G-Cter in SUMO2) cross-link. One can recognise a bHLH domain in the interval 2362 to 2413 (YYRRTHTANERRRRGEMRDLFEKLKITLGLLHSSKVSKSLILNRAFSEIQGL). Ser2480 is modified (phosphoserine). The tract at residues 2515–2534 (KRDQATENASPSDTPHSSAN) is disordered. Over residues 2520 to 2534 (TENASPSDTPHSSAN) the composition is skewed to polar residues. Glycyl lysine isopeptide (Lys-Gly) (interchain with G-Cter in SUMO2) cross-links involve residues Lys2568 and Lys2618. The span at 2629–2651 (SEASSLKDTERISSRGNHRDSRK) shows a compositional bias: basic and acidic residues. Positions 2629-2654 (SEASSLKDTERISSRGNHRDSRKALG) are disordered. Lys2724 participates in a covalent cross-link: Glycyl lysine isopeptide (Lys-Gly) (interchain with G-Cter in SUMO2). Phosphoserine is present on residues Ser2849 and Ser2860. Residues 2877–2917 (LVSHRKSSDGGQSTSGLPAEPESVSSPPILHMKTGPENSNT) are disordered. Residue Lys2979 forms a Glycyl lysine isopeptide (Lys-Gly) (interchain with G-Cter in SUMO2) linkage.

In terms of assembly, component of some MLL1/MLL complex, at least composed of the core components KMT2A/MLL1, ASH2L, HCFC1/HCF1, WDR5 and RBBP5, as well as the facultative components BACC1, CHD8, E2F6, HSP70, INO80C, KANSL1, LAS1L, MAX, MCRS1, MGA, MYST1/MOF, PELP1, PHF20, PRP31, RING2, RUVB1/TIP49A, RUVB2/TIP49B, SENP3, TAF1, TAF4, TAF6, TAF7, TAF9 and TEX10. Interacts with ZMYND11. Interacts with MAX. Requires heterodimerization with MAX for E-box binding. Highly expressed in germ cells and granulosa cells.

It is found in the nucleus. Its function is as follows. Functions as a dual-specificity transcription factor, regulating the expression of both MAX-network and T-box family target genes. Functions as a repressor or an activator. Binds to 5'-AATTTCACACCTAGGTGTGAAATT-3' core sequence and seems to regulate MYC-MAX target genes. Suppresses transcriptional activation by MYC and inhibits MYC-dependent cell transformation. Function activated by heterodimerization with MAX. This heterodimerization serves the dual function of both generating an E-box-binding heterodimer and simultaneously blocking interaction of a corepressor. The protein is MAX gene-associated protein of Mus musculus (Mouse).